A 384-amino-acid polypeptide reads, in one-letter code: Probable protein phosphatase 2C 48 (384 aa).

In terms of domain architecture, PPM-type phosphatase spans isoleucine 47–leucine 358. Serine 78 carries the post-translational modification Phosphoserine. The Mn(2+) site is built by aspartate 89, glycine 90, aspartate 290, and aspartate 349.

It belongs to the PP2C family. Mg(2+) is required as a cofactor. Requires Mn(2+) as cofactor.

It catalyses the reaction O-phospho-L-seryl-[protein] + H2O = L-seryl-[protein] + phosphate. The catalysed reaction is O-phospho-L-threonyl-[protein] + H2O = L-threonyl-[protein] + phosphate. Functionally, may dephosphorylate and repress plasma membrane H(+)-ATPases (PM H(+)-ATPases, e.g. AHA1 and AHA2), thus influencing negatively plant growth and fitness. This Arabidopsis thaliana (Mouse-ear cress) protein is Probable protein phosphatase 2C 48.